The following is a 194-amino-acid chain: Putative NAD(P)H nitroreductase YfhC (194 aa).

FMN-binding positions include 20–22 (RRS), 147–148 (KI), and Arg188.

Belongs to the nitroreductase family. FMN is required as a cofactor.

This is Putative NAD(P)H nitroreductase YfhC (yfhC) from Bacillus subtilis (strain 168).